The primary structure comprises 690 residues: Cyclic nucleotide-gated channel alpha-1 (690 aa).

Over Met-1 to Tyr-163 the chain is Cytoplasmic. 2 disordered regions span residues Gly-33–Arg-76 and Asn-88–Lys-151. Residues Gly-40 to Thr-54 are compositionally biased toward acidic residues. Residues Arg-64–Arg-76 are compositionally biased toward polar residues. Residues Ser-111–Lys-151 are compositionally biased toward basic and acidic residues. Residues Tyr-164–Ala-185 traverse the membrane as a helical segment. The Extracellular portion of the chain corresponds to Cys-186–Leu-195. Residues Glu-196–Val-215 form a helical membrane-spanning segment. The Cytoplasmic segment spans residues Arg-216 to Thr-241. Residues Phe-242 to Val-251 traverse the membrane as a helical segment. The Extracellular segment spans residues Ile-252–Asn-264. Residues Tyr-265 to Phe-283 form a helical membrane-spanning segment. The Cytoplasmic segment spans residues Gln-284–Asn-291. The chain crosses the membrane as a helical span at residues Tyr-292–Val-315. The ion conduction pathway stretch occupies residues Pro-293–Asn-402. The Extracellular segment spans residues Tyr-316–Arg-342. Asn-327 carries an N-linked (GlcNAc...) asparagine glycan. 2 consecutive transmembrane segments (helical) span residues Leu-343 to Tyr-373 and Phe-374 to Ser-399. The interval Thr-360 to Glu-363 is selectivity filter. The Cytoplasmic segment spans residues Asn-400 to Asp-690. Residues Ala-403 to Ala-479 form a C-linker region. Residues Glu-482–Lys-603 are cyclic nucleotide-binding domain (CNBD). Positions 543, 546, 559, and 560 each coordinate 3',5'-cyclic GMP. The 3',5'-cyclic AMP site is built by Arg-559 and Thr-560. The stretch at Leu-621 to Leu-664 forms a coiled coil.

The protein belongs to the cyclic nucleotide-gated cation channel (TC 1.A.1.5) family. CNGA1 subfamily. In terms of assembly, forms a heterotetramer with CNGB1 in a 3:1 ratio. May also form cyclic nucleotide-activated homotetrameric channels, that are efficiently activated by saturating cGMP, but poorly activated by saturating cAMP compared to the heterotetramer with CNGB1. The channel binds Ca(2+)-bound CALM1 via CaM1 and CaM2 regions of the CNGB1 subunit; this interaction modulates the affinity of the channel for cNMPs in response to intracellular Ca(2+) levels. Expressed in the retina, in rod cells (at protein level).

Its subcellular location is the cell membrane. The enzyme catalyses Ca(2+)(in) = Ca(2+)(out). The catalysed reaction is Na(+)(in) = Na(+)(out). It carries out the reaction K(+)(in) = K(+)(out). It catalyses the reaction NH4(+)(in) = NH4(+)(out). The enzyme catalyses Rb(+)(in) = Rb(+)(out). The catalysed reaction is Li(+)(in) = Li(+)(out). It carries out the reaction Cs(+)(in) = Cs(+)(out). Pore-forming subunit of the rod cyclic nucleotide-gated channel. Mediates rod photoresponses at dim light converting transient changes in intracellular cGMP levels into electrical signals. In the dark, cGMP levels are high and keep the channel open enabling a steady inward current carried by Na(+) and Ca(2+) ions that leads to membrane depolarization and neurotransmitter release from synaptic terminals. Upon photon absorption cGMP levels decline leading to channel closure and membrane hyperpolarization that ultimately slows neurotransmitter release and signals the presence of light, the end point of the phototransduction cascade. Conducts cGMP- and cAMP-gated ion currents, with permeability for monovalent and divalent cations. The selectivity for Ca(2+) over Na(+) increases with cGMP concentrations, whereas the selectivity among monovalent ions is independent of the cGMP levels. In Bos taurus (Bovine), this protein is Cyclic nucleotide-gated channel alpha-1.